A 228-amino-acid chain; its full sequence is Prolactin (228 aa).

The first 29 residues, 1 to 29 (MCTKRSSLKGSLLLLLLISSLLLSRSVDS), serve as a signal peptide directing secretion. A disulfide bridge links C33 with C40. 3 positions are modified to phosphoserine: S55, S63, and S119. 2 disulfide bridges follow: C87-C203 and C220-C228.

It belongs to the somatotropin/prolactin family. Interacts with PRLR.

It is found in the secreted. Its function is as follows. Prolactin acts primarily on the mammary gland by promoting lactation. The sequence is that of Prolactin (PRL) from Isoodon macrourus (Short-nosed bandicoot).